The following is a 354-amino-acid chain: DNA polymerase IV (354 aa).

The region spanning 6-187 is the UmuC domain; it reads IIHIDCDCFY…LPVTKLHGVG (182 aa). Residues Asp10 and Asp105 each contribute to the Mg(2+) site. Residue Glu106 is part of the active site.

The protein belongs to the DNA polymerase type-Y family. Monomer. Mg(2+) is required as a cofactor.

The protein resides in the cytoplasm. It carries out the reaction DNA(n) + a 2'-deoxyribonucleoside 5'-triphosphate = DNA(n+1) + diphosphate. Poorly processive, error-prone DNA polymerase involved in untargeted mutagenesis. Copies undamaged DNA at stalled replication forks, which arise in vivo from mismatched or misaligned primer ends. These misaligned primers can be extended by PolIV. Exhibits no 3'-5' exonuclease (proofreading) activity. May be involved in translesional synthesis, in conjunction with the beta clamp from PolIII. This is DNA polymerase IV from Pseudomonas syringae pv. syringae (strain B728a).